Consider the following 280-residue polypeptide: Ribosomal RNA small subunit methyltransferase A (280 aa).

Leucine 24, glycine 49, glutamate 70, aspartate 95, and asparagine 118 together coordinate S-adenosyl-L-methionine.

This sequence belongs to the class I-like SAM-binding methyltransferase superfamily. rRNA adenine N(6)-methyltransferase family. RsmA subfamily.

Its subcellular location is the cytoplasm. It catalyses the reaction adenosine(1518)/adenosine(1519) in 16S rRNA + 4 S-adenosyl-L-methionine = N(6)-dimethyladenosine(1518)/N(6)-dimethyladenosine(1519) in 16S rRNA + 4 S-adenosyl-L-homocysteine + 4 H(+). In terms of biological role, specifically dimethylates two adjacent adenosines (A1518 and A1519) in the loop of a conserved hairpin near the 3'-end of 16S rRNA in the 30S particle. May play a critical role in biogenesis of 30S subunits. In Syntrophus aciditrophicus (strain SB), this protein is Ribosomal RNA small subunit methyltransferase A.